The primary structure comprises 339 residues: Ketol-acid reductoisomerase (NADP(+)) (339 aa).

The KARI N-terminal Rossmann domain occupies 1–182 (MRVYYDRDAD…GGGRAGVIET (182 aa)). NADP(+) contacts are provided by residues 24–27 (YGSQ), Arg-48, Ser-51, Thr-53, and 83–86 (DELQ). Residue His-108 is part of the active site. Gly-134 contacts NADP(+). Positions 183 to 328 (TFKEECETDL…EKLRAMMPWI (146 aa)) constitute a KARI C-terminal knotted domain. Residues Asp-191, Glu-195, Glu-227, and Glu-231 each coordinate Mg(2+). Ser-252 provides a ligand contact to substrate.

It belongs to the ketol-acid reductoisomerase family. It depends on Mg(2+) as a cofactor.

The enzyme catalyses (2R)-2,3-dihydroxy-3-methylbutanoate + NADP(+) = (2S)-2-acetolactate + NADPH + H(+). It carries out the reaction (2R,3R)-2,3-dihydroxy-3-methylpentanoate + NADP(+) = (S)-2-ethyl-2-hydroxy-3-oxobutanoate + NADPH + H(+). The protein operates within amino-acid biosynthesis; L-isoleucine biosynthesis; L-isoleucine from 2-oxobutanoate: step 2/4. Its pathway is amino-acid biosynthesis; L-valine biosynthesis; L-valine from pyruvate: step 2/4. Involved in the biosynthesis of branched-chain amino acids (BCAA). Catalyzes an alkyl-migration followed by a ketol-acid reduction of (S)-2-acetolactate (S2AL) to yield (R)-2,3-dihydroxy-isovalerate. In the isomerase reaction, S2AL is rearranged via a Mg-dependent methyl migration to produce 3-hydroxy-3-methyl-2-ketobutyrate (HMKB). In the reductase reaction, this 2-ketoacid undergoes a metal-dependent reduction by NADPH to yield (R)-2,3-dihydroxy-isovalerate. The chain is Ketol-acid reductoisomerase (NADP(+)) from Xanthobacter autotrophicus (strain ATCC BAA-1158 / Py2).